We begin with the raw amino-acid sequence, 505 residues long: MGETLGDSPVDPEHGAFADALPMSTSQEITMVDTEMPFWPTNFGISSVDLSVMEDHSHSFDIKPFTTVDFSSISAPHYEDIPFTRADPMVADYKYDLKLQEYQSAIKVEPASPPYYSEKTQLYNRPHEEPSNSLMAIECRVCGDKASGFHYGVHACEGCKGFFRRTIRLKLIYDRCDLNCRIHKKSRNKCQYCRFQKCLAVGMSHNAIRFGRMPQAEKEKLLAEISSDIDQLNPESADLRALAKHLYDSYIKSFPLTKAKARAILTGKTTDKSPFVIYDMNSLMMGEDKIKFKHITPLQEQSKEVAIRIFQGCQFRSVEAVQEITEYAKNIPGFINLDLNDQVTLLKYGVHEIIYTMLASLMNKDGVLISEGQGFMTREFLKNLRKPFGDFMEPKFEFAVKFNALELDDSDLAIFIAVIILSGDRPGLLNVKPIEDIQDNLLQALELQLKLNHPESSQLFAKVLQKMTDLRQIVTEHVQLLHVIKKTETDMSLHPLLQEIYKDLY.

An O-linked (GlcNAc) threonine glycan is attached at T84. S112 bears the Phosphoserine; by MAPK mark. Residues 136–210 (AIECRVCGDK…VGMSHNAIRF (75 aa)) constitute a DNA-binding region (nuclear receptor). 2 consecutive NR C4-type zinc fingers follow at residues 139-159 (CRVC…CEGC) and 176-198 (CDLN…FQKC). The segment at 205–280 (HNAIRFGRMP…DKSPFVIYDM (76 aa)) is interaction with FAM120B. Residues 238–503 (DLRALAKHLY…HPLLQEIYKD (266 aa)) enclose the NR LBD domain. K252 participates in a covalent cross-link: Glycyl lysine isopeptide (Lys-Gly) (interchain with G-Cter in ubiquitin). The 9aaTAD motif lies at 495 to 503 (PLLQEIYKD).

Belongs to the nuclear hormone receptor family. NR1 subfamily. In terms of assembly, heterodimer with other nuclear receptors, such as RXRA. The heterodimer with the retinoic acid receptor RXRA is called adipocyte-specific transcription factor ARF6. Interacts with NCOA6 coactivator, leading to a strong increase in transcription of target genes. Interacts with coactivator PPARBP, leading to a mild increase in transcription of target genes. Interacts with NOCA7 in a ligand-inducible manner. Interacts with NCOA1 and NCOA2 LXXLL motifs. Interacts with ASXL1, ASXL2, DNTTIP2, FAM120B, MAP2K1/MEK1, NR0B2, PDPK1, PRDM16, PRMT2 and TGFB1I1. Interacts (when activated by agonist) with PPP5C. Interacts with HELZ2 and THRAP3; the interaction stimulates the transcriptional activity of PPARG. Interacts with PER2, the interaction is ligand dependent and blocks PPARG recruitment to target promoters. Interacts with NOCT. Interacts with FOXO1 (acetylated form). Interacts with ACTN4. Interacts (when in the liganded conformation) with GPS2. Interacts with CRY1 and CRY2 in a ligand-dependent manner. In the absence of hormonal ligand, interacts with TACC1. In macrophages, interacts with PAQR3 and STUB1; the interactions promote PPARG poylubiquitination and STUB1-mediated degradation. Post-translationally, O-GlcNAcylation at Thr-84 reduces transcriptional activity in adipocytes. In terms of processing, phosphorylated in basal conditions and dephosphorylated when treated with the ligand. May be dephosphorylated by PPP5C. The phosphorylated Ser-112 form is recognized by PER2 and repressed, dephosphorylation at Ser-112 induces adipogenic activity. Ser-112 phosphorylation levels are reduced by 65% in brown adipose tissue compared to white adipose tissue. Ubiquitinated by E3 ubiquitin-protein ligase complex containing FBXO9; leading to proteasomal degradation. Post-translationally, ubiquitinated by E3 ubiquitin-protein ligase complex containing FBXO9; leading to proteasomal degradation. Ubiquitinated at Lys-252 by TRIM55 leading to proteasomal degradation. Ubiquitinated by E3 ubiquitin-protein ligase STUB1/CHIP; leading to proteasomal degradation. Highest expression in white and brown adipose tissue. Also found in liver, skeletal muscle, heart, adrenal gland, spleen, kidney and intestine. Isoform 2 is more abundant than isoform 1 in adipose tissue.

It is found in the nucleus. Its subcellular location is the cytoplasm. Its activity is regulated as follows. PDPK1 activates its transcriptional activity independently of its kinase activity. Functionally, nuclear receptor that binds peroxisome proliferators such as hypolipidemic drugs and fatty acids. Once activated by a ligand, the nuclear receptor binds to DNA specific PPAR response elements (PPRE) and modulates the transcription of its target genes, such as acyl-CoA oxidase. It therefore controls the peroxisomal beta-oxidation pathway of fatty acids. Key regulator of adipocyte differentiation and glucose homeostasis. ARF6 acts as a key regulator of the tissue-specific adipocyte P2 (aP2) enhancer. Acts as a critical regulator of gut homeostasis by suppressing NF-kappa-B-mediated pro-inflammatory responses. Plays a role in the regulation of cardiovascular circadian rhythms by regulating the transcription of BMAL1 in the blood vessels. The protein is Peroxisome proliferator-activated receptor gamma (Pparg) of Mus musculus (Mouse).